A 289-amino-acid chain; its full sequence is Mitochondrial fission regulator 1-like (289 aa).

Threonine 27 carries the post-translational modification Phosphothreonine. Residues serine 38, serine 100, serine 107, serine 221, serine 222, serine 235, serine 258, and serine 270 each carry the phosphoserine modification.

This sequence belongs to the MTFR1 family. Phosphorylated by AMPK. Upon stress, phosphorylation by AMPK is sufficient to induce mitochondrial fragmentation.

It localises to the mitochondrion outer membrane. Its function is as follows. Mitochondrial protein required for adaptation of miochondrial dynamics to metabolic changes. Regulates mitochondrial morphology at steady state and mediates AMPK-dependent stress-induced mitochondrial fragmentation via the control of OPA1 levels. In Bos taurus (Bovine), this protein is Mitochondrial fission regulator 1-like (MTFR1L).